Consider the following 279-residue polypeptide: MGNTMLLTLLLVVVAAYGQTPPPPEGFRWVKNESFSDEFDGEVLDTTKWYARSPYWVNGRPPATFRAGSVSVKEGKLQIKNSVLDGDKKYNIAGGAVASVAKDALYGYYEARMKASSISMSSTFWMKNKPDTKECPFEVQELDIVEVVGQQKTGWDFRTNLKSNTHIFYTDCDGEKTVKSAGGTEAKIDPPADEAYHVYGCWWVDANTIKIYLDGEYQFTMNPSTHFRDTPFNKPMYMHMVTETYNWETPPTPEELADDTKNTTYYDWVRSYTLLPVDQ.

Residues 1 to 18 (MGNTMLLTLLLVVVAAYG) form the signal peptide. The 259-residue stretch at 19–277 (QTPPPPEGFR…WVRSYTLLPV (259 aa)) folds into the GH16 domain. Substrate contacts are provided by W56, R60, E141, E146, and E243. Catalysis depends on E141, which acts as the Nucleophile. E146 (proton donor) is an active-site residue.

The protein belongs to the glycosyl hydrolase 16 family.

It localises to the periplasm. The enzyme catalyses Hydrolysis of beta-D-galactopyranose-(1-&gt;4)-alpha-L-galactopyranose-6-sulfate linkages in porphyran.. Cleaves the sulfated polysaccharide porphyran at the (1-&gt;4) linkages between beta-D-galactopyranose and alpha-L-galactopyranose-6-sulfate, forming mostly the disaccharide alpha-L-galactopyranose-6-sulfate-(1-&gt;3)-beta-D-galactose. The sequence is that of Beta-porphyranase E (porE) from Zobellia galactanivorans (strain DSM 12802 / CCUG 47099 / CIP 106680 / NCIMB 13871 / Dsij).